A 98-amino-acid chain; its full sequence is Cystatin-B (98 aa).

Met1 bears the N-acetylmethionine mark. The Secondary area of contact motif lies at Gln46 to Gly50.

It belongs to the cystatin family. Able to form dimers stabilized by noncovalent forces.

It is found in the cytoplasm. Functionally, this is an intracellular thiol proteinase inhibitor. This Bos taurus (Bovine) protein is Cystatin-B (CSTB).